Here is a 90-residue protein sequence, read N- to C-terminus: Small ribosomal subunit protein uS15 (90 aa).

This sequence belongs to the universal ribosomal protein uS15 family. Part of the 30S ribosomal subunit. Forms a bridge to the 50S subunit in the 70S ribosome, contacting the 23S rRNA.

Functionally, one of the primary rRNA binding proteins, it binds directly to 16S rRNA where it helps nucleate assembly of the platform of the 30S subunit by binding and bridging several RNA helices of the 16S rRNA. Its function is as follows. Forms an intersubunit bridge (bridge B4) with the 23S rRNA of the 50S subunit in the ribosome. In Campylobacter lari (strain RM2100 / D67 / ATCC BAA-1060), this protein is Small ribosomal subunit protein uS15.